We begin with the raw amino-acid sequence, 942 residues long: tRNAse Z TRZ4, mitochondrial (942 aa).

A mitochondrion-targeting transit peptide spans 1 to 50; sequence MLTSSMPQNLSLFGFSPLKSSSFALILRPFSLYPPIFASSSPAPSRRPPR. The interval 38–85 is disordered; the sequence is ASSSPAPSRRPPRTAGYRRSGPSPPRRKWSSFEEQKRKGRSPMEKDKA. Basic and acidic residues predominate over residues 67–85; that stretch reads SSFEEQKRKGRSPMEKDKA.

Belongs to the RNase Z family. In terms of assembly, homodimer. Requires Zn(2+) as cofactor. Ca(2+) is required as a cofactor. It depends on Mn(2+) as a cofactor. The cofactor is Mg(2+).

It is found in the mitochondrion. It catalyses the reaction Endonucleolytic cleavage of RNA, removing extra 3' nucleotides from tRNA precursor, generating 3' termini of tRNAs. A 3'-hydroxy group is left at the tRNA terminus and a 5'-phosphoryl group is left at the trailer molecule.. Zinc phosphodiesterase, which displays tRNA 3'-processing endonuclease activity. Involved in tRNA maturation, by removing a 3'-trailer from precursor tRNA. Can process the mitochondrial tRNA-like structures (t-elements). This chain is tRNAse Z TRZ4, mitochondrial, found in Arabidopsis thaliana (Mouse-ear cress).